A 207-amino-acid polypeptide reads, in one-letter code: GTP-binding protein Rheb homolog 1 (207 aa).

GTP contacts are provided by G25, K26, S27, Y42, T45, N126, D129, and A157. Position 27 (S27) interacts with Mg(2+). Residues 42–50 carry the Effector region motif; sequence YESTIEDQH. T45 serves as a coordination point for Mg(2+). Positions 180 to 193 are enriched in polar residues; the sequence is NLSPTERPNGNSPK. The segment at 180–207 is disordered; sequence NLSPTERPNGNSPKRNPFKDDGKPCSIS. Over residues 196-207 the composition is skewed to basic and acidic residues; sequence PFKDDGKPCSIS. Position 204 is a cysteine methyl ester (C204). The S-farnesyl cysteine moiety is linked to residue C204. Residues 205–207 constitute a propeptide, removed in mature form; it reads SIS.

It belongs to the small GTPase superfamily. Rheb family.

Its subcellular location is the cell membrane. It catalyses the reaction GTP + H2O = GDP + phosphate + H(+). In terms of biological role, binds GTP and exhibits intrinsic GTPase activity. This is GTP-binding protein Rheb homolog 1 (rheb-1) from Caenorhabditis elegans.